Consider the following 2120-residue polypeptide: Separin (2120 aa).

Phosphoserine is present on serine 1126. Positions 1299–1355 (IKSVPGSEPSKTQGQKRSGRGRQKLASAPLRLNNTSQKGLEGRGLPCTPKPPDRIRQ) are disordered. 2 positions are modified to phosphoserine: serine 1396 and serine 1399. 2 disordered regions span residues 1412–1485 (AEEP…PEIM) and 1507–1561 (GSDG…PRLR). 2 stretches are compositionally biased toward basic residues: residues 1418–1432 (RGTA…RKGL) and 1454–1463 (RSRRAKKVAS). The span at 1464–1473 (RHCEERRPQR) shows a compositional bias: basic and acidic residues. At serine 1508 the chain carries Phosphoserine. Basic and acidic residues predominate over residues 1548–1558 (PDKESDKDLGP). The region spanning 1945–2040 (PRSTFYVLNP…SAALAVRGNL (96 aa)) is the Peptidase C50 domain. Cysteine 2029 is a catalytic residue.

Interacts with PTTG1. Interacts with RAD21. Post-translationally, autocleaves. This function, which is not essential for its protease activity, is unknown. In terms of processing, phosphorylated by CDK1. There are 8 Ser/Thr phosphorylation sites. Among them, Ser-1126 phosphorylation is the major site, which conducts to the enzyme inactivation.

The protein resides in the cytoplasm. Its subcellular location is the nucleus. The catalysed reaction is All bonds known to be hydrolyzed by this endopeptidase have arginine in P1 and an acidic residue in P4. P6 is often occupied by an acidic residue or by a hydroxy-amino-acid residue, the phosphorylation of which enhances cleavage.. Regulated by at least two independent mechanisms. First, it is inactivated via its interaction with securin/PTTG1, which probably covers its active site. The association with PTTG1 is not only inhibitory, since PTTG1 is also required for activating it, the enzyme being inactive in cells in which PTTG1 is absent. PTTG1 degradation at anaphase, liberates it and triggers RAD21 cleavage. Second, phosphorylation at Ser-1126 inactivates it. The complete phosphorylation during mitosis, is removed when cells undergo anaphase. Activation of the enzyme at the metaphase-anaphase transition probably requires the removal of both securin and inhibitory phosphate. Its function is as follows. Caspase-like protease, which plays a central role in the chromosome segregation by cleaving the SCC1/RAD21 subunit of the cohesin complex at the onset of anaphase. During most of the cell cycle, it is inactivated by different mechanisms. The chain is Separin (ESPL1) from Homo sapiens (Human).